The primary structure comprises 164 residues: Deoxyuridine 5'-triphosphate nucleotidohydrolase (164 aa).

Residues 66–68 (RSG), asparagine 79, 83–85 (TVD), and lysine 93 each bind substrate.

It belongs to the dUTPase family. It depends on Mg(2+) as a cofactor.

The catalysed reaction is dUTP + H2O = dUMP + diphosphate + H(+). It functions in the pathway pyrimidine metabolism; dUMP biosynthesis; dUMP from dCTP (dUTP route): step 2/2. This enzyme is involved in nucleotide metabolism: it produces dUMP, the immediate precursor of thymidine nucleotides and it decreases the intracellular concentration of dUTP so that uracil cannot be incorporated into DNA. The chain is Deoxyuridine 5'-triphosphate nucleotidohydrolase from Rhodococcus erythropolis (strain PR4 / NBRC 100887).